The chain runs to 294 residues: Acetyl-coenzyme A carboxylase carboxyl transferase subunit beta (294 aa).

In terms of domain architecture, CoA carboxyltransferase N-terminal spans valine 25 to aspartate 294. Positions 29, 32, 48, and 51 each coordinate Zn(2+). The C4-type zinc finger occupies cysteine 29 to cysteine 51.

This sequence belongs to the AccD/PCCB family. As to quaternary structure, acetyl-CoA carboxylase is a heterohexamer composed of biotin carboxyl carrier protein (AccB), biotin carboxylase (AccC) and two subunits each of ACCase subunit alpha (AccA) and ACCase subunit beta (AccD). Zn(2+) serves as cofactor.

The protein resides in the cytoplasm. The enzyme catalyses N(6)-carboxybiotinyl-L-lysyl-[protein] + acetyl-CoA = N(6)-biotinyl-L-lysyl-[protein] + malonyl-CoA. Its pathway is lipid metabolism; malonyl-CoA biosynthesis; malonyl-CoA from acetyl-CoA: step 1/1. Functionally, component of the acetyl coenzyme A carboxylase (ACC) complex. Biotin carboxylase (BC) catalyzes the carboxylation of biotin on its carrier protein (BCCP) and then the CO(2) group is transferred by the transcarboxylase to acetyl-CoA to form malonyl-CoA. The polypeptide is Acetyl-coenzyme A carboxylase carboxyl transferase subunit beta (Actinobacillus succinogenes (strain ATCC 55618 / DSM 22257 / CCUG 43843 / 130Z)).